The following is a 465-amino-acid chain: Ribosomal oxygenase 2 (465 aa).

The JmjC domain occupies 139-271; it reads QPQRFKDELW…NSWGDYLLDS (133 aa). Fe cation is bound by residues His-179, Asp-181, and His-240. Ser-309 carries the phosphoserine modification.

It belongs to the ROX family. MINA53 subfamily. Fe(2+) is required as a cofactor.

It localises to the nucleus. The protein resides in the nucleolus. The enzyme catalyses L-histidyl-[ribosomal protein uL15] + 2-oxoglutarate + O2 = (3S)-3-hydroxy-L-histidyl-[ribosomal protein uL15] + succinate + CO2. It carries out the reaction L-histidyl-[protein] + 2-oxoglutarate + O2 = (3S)-3-hydroxy-L-histidyl-[protein] + succinate + CO2. Functionally, oxygenase that can act as both a histone lysine demethylase and a ribosomal histidine hydroxylase. Is involved in the demethylation of trimethylated 'Lys-9' on histone H3 (H3K9me3), leading to an increase in ribosomal RNA expression. Also catalyzes the hydroxylation of 60S ribosomal protein L27a on 'His-39'. May play an important role in cell growth and survival. May be involved in ribosome biogenesis, most likely during the assembly process of pre-ribosomal particles. This is Ribosomal oxygenase 2 from Rattus norvegicus (Rat).